The sequence spans 349 residues: Protein RecA (349 aa).

Residue 65–72 (GPESSGKT) participates in ATP binding.

This sequence belongs to the RecA family.

It localises to the cytoplasm. In terms of biological role, can catalyze the hydrolysis of ATP in the presence of single-stranded DNA, the ATP-dependent uptake of single-stranded DNA by duplex DNA, and the ATP-dependent hybridization of homologous single-stranded DNAs. It interacts with LexA causing its activation and leading to its autocatalytic cleavage. The chain is Protein RecA from Aliarcobacter butzleri (strain RM4018) (Arcobacter butzleri).